The chain runs to 260 residues: Dof zinc finger protein DOF1.2 (260 aa).

The Dof-type zinc finger occupies 38–92 (PACPRCASSNTKFCYYNNYSLSQPRYFCKGCRRYWTKGGSLRNIPVGGGCRKRSR). 4 residues coordinate Zn(2+): Cys-40, Cys-43, Cys-65, and Cys-68. The tract at residues 83-124 (VGGGCRKRSRSRQNSHKRFGRNENRPDGLINQDDGFQSSPPG) is disordered. Positions 87-101 (CRKRSRSRQNSHKRF) are enriched in basic residues.

The protein resides in the nucleus. Its function is as follows. Transcription factor that binds specifically to a 5'-AA[AG]G-3' consensus core sequence. The chain is Dof zinc finger protein DOF1.2 (DOF1.2) from Arabidopsis thaliana (Mouse-ear cress).